The following is a 644-amino-acid chain: Exoribonuclease 2 (644 aa).

The 328-residue stretch at 189-516 (RRDLTALNFV…NHRLLKAIVK (328 aa)) folds into the RNB domain. The 83-residue stretch at 561 to 643 (DTRFAAEIID…ETRSIIARPV (83 aa)) folds into the S1 motif domain.

Belongs to the RNR ribonuclease family. RNase II subfamily.

Its subcellular location is the cytoplasm. The catalysed reaction is Exonucleolytic cleavage in the 3'- to 5'-direction to yield nucleoside 5'-phosphates.. Involved in mRNA degradation. Hydrolyzes single-stranded polyribonucleotides processively in the 3' to 5' direction. In Enterobacter sp. (strain 638), this protein is Exoribonuclease 2.